Reading from the N-terminus, the 428-residue chain is D-amino acid dehydrogenase (428 aa).

3–17 (VVILGSGVVGVASAY) contacts FAD.

This sequence belongs to the DadA oxidoreductase family. Requires FAD as cofactor.

It catalyses the reaction a D-alpha-amino acid + A + H2O = a 2-oxocarboxylate + AH2 + NH4(+). It functions in the pathway amino-acid degradation; D-alanine degradation; NH(3) and pyruvate from D-alanine: step 1/1. Oxidative deamination of D-amino acids. This chain is D-amino acid dehydrogenase, found in Burkholderia thailandensis (strain ATCC 700388 / DSM 13276 / CCUG 48851 / CIP 106301 / E264).